A 373-amino-acid polypeptide reads, in one-letter code: Flagellar P-ring protein (373 aa).

Positions 1 to 26 (MKLFFRIVTLVAVVAMSLADMAPAWA) are cleaved as a signal peptide.

This sequence belongs to the FlgI family. As to quaternary structure, the basal body constitutes a major portion of the flagellar organelle and consists of four rings (L,P,S, and M) mounted on a central rod.

It localises to the periplasm. Its subcellular location is the bacterial flagellum basal body. In terms of biological role, assembles around the rod to form the L-ring and probably protects the motor/basal body from shearing forces during rotation. The polypeptide is Flagellar P-ring protein (Rhizobium etli (strain ATCC 51251 / DSM 11541 / JCM 21823 / NBRC 15573 / CFN 42)).